Consider the following 211-residue polypeptide: Thymidylate kinase (211 aa).

11 to 18 (GPDGAGKT) contacts ATP.

This sequence belongs to the thymidylate kinase family.

It carries out the reaction dTMP + ATP = dTDP + ADP. In terms of biological role, phosphorylation of dTMP to form dTDP in both de novo and salvage pathways of dTTP synthesis. The protein is Thymidylate kinase of Streptococcus uberis (strain ATCC BAA-854 / 0140J).